The sequence spans 86 residues: Small ribosomal subunit protein bS16 (86 aa).

This sequence belongs to the bacterial ribosomal protein bS16 family.

The sequence is that of Small ribosomal subunit protein bS16 from Hamiltonella defensa subsp. Acyrthosiphon pisum (strain 5AT).